The sequence spans 682 residues: Tail-specific protease (682 aa).

The first 22 residues, 1–22 (MNTFFRLTALAGLLALAGQSFA), serve as a signal peptide directing secretion. One can recognise a PDZ domain in the interval 238 to 322 (NTEMSLSLEG…SKVRLEILPA (85 aa)). Catalysis depends on charge relay system residues serine 452, aspartate 463, and lysine 477.

This sequence belongs to the peptidase S41A family.

The protein localises to the cell inner membrane. The enzyme catalyses The enzyme shows specific recognition of a C-terminal tripeptide, Xaa-Yaa-Zaa, in which Xaa is preferably Ala or Leu, Yaa is preferably Ala or Tyr, and Zaa is preferably Ala, but then cleaves at a variable distance from the C-terminus. A typical cleavage is -Ala-Ala-|-Arg-Ala-Ala-Lys-Glu-Asn-Tyr-Ala-Leu-Ala-Ala.. Functionally, involved in the cleavage of a C-terminal peptide of 11 residues from the precursor form of penicillin-binding protein 3 (PBP3). May be involved in protection of the bacterium from thermal and osmotic stresses. The chain is Tail-specific protease (prc) from Salmonella typhimurium (strain LT2 / SGSC1412 / ATCC 700720).